Consider the following 211-residue polypeptide: Uridine kinase (211 aa).

13–20 (GASASGKS) provides a ligand contact to ATP.

It belongs to the uridine kinase family.

It localises to the cytoplasm. It catalyses the reaction uridine + ATP = UMP + ADP + H(+). It carries out the reaction cytidine + ATP = CMP + ADP + H(+). It participates in pyrimidine metabolism; CTP biosynthesis via salvage pathway; CTP from cytidine: step 1/3. The protein operates within pyrimidine metabolism; UMP biosynthesis via salvage pathway; UMP from uridine: step 1/1. This is Uridine kinase from Shewanella pealeana (strain ATCC 700345 / ANG-SQ1).